Reading from the N-terminus, the 632-residue chain is tRNA-guanine(15) transglycosylase (632 aa).

Aspartate 86 (nucleophile) is an active-site residue. Substrate contacts are provided by aspartate 121 and glycine 186. The 76-residue stretch at 553 to 628 (AMRVTVSKES…IAVKVHEGRD (76 aa)) folds into the PUA domain.

Belongs to the archaeosine tRNA-ribosyltransferase family. Zn(2+) is required as a cofactor.

The enzyme catalyses guanosine(15) in tRNA + 7-cyano-7-deazaguanine = 7-cyano-7-carbaguanosine(15) in tRNA + guanine. Its pathway is tRNA modification; archaeosine-tRNA biosynthesis. Exchanges the guanine residue with 7-cyano-7-deazaguanine (preQ0) at position 15 in the dihydrouridine loop (D-loop) of archaeal tRNAs. This Thermoplasma acidophilum (strain ATCC 25905 / DSM 1728 / JCM 9062 / NBRC 15155 / AMRC-C165) protein is tRNA-guanine(15) transglycosylase.